The following is a 549-amino-acid chain: uncharacterized protein (549 aa).

This is an uncharacterized protein from Methanocaldococcus jannaschii (strain ATCC 43067 / DSM 2661 / JAL-1 / JCM 10045 / NBRC 100440) (Methanococcus jannaschii).